The following is a 122-amino-acid chain: Large ribosomal subunit protein uL14 (122 aa).

The protein belongs to the universal ribosomal protein uL14 family. In terms of assembly, part of the 50S ribosomal subunit. Forms a cluster with proteins L3 and L19. In the 70S ribosome, L14 and L19 interact and together make contacts with the 16S rRNA in bridges B5 and B8.

Functionally, binds to 23S rRNA. Forms part of two intersubunit bridges in the 70S ribosome. The polypeptide is Large ribosomal subunit protein uL14 (Clavibacter michiganensis subsp. michiganensis (strain NCPPB 382)).